Reading from the N-terminus, the 360-residue chain is GDP-mannose transporter (360 aa).

Over 1–49 (MSSSETKGRNEEDVAEIKKAIATGAVKDPSNLSAIPPIFVVSGANFSMN) the chain is Cytoplasmic. The chain crosses the membrane as a helical span at residues 50-67 (FLLLCIQSSVCCACVFAV). The Lumenal portion of the chain corresponds to 68 to 84 (KKLGIISFRDFDMKDAK). The helical transmembrane segment at 85-105 (MWFPISFLLVSVIYTGSKSLQ) threads the bilayer. The Cytoplasmic portion of the chain corresponds to 106 to 110 (YLSIP). The chain crosses the membrane as a helical span at residues 111–131 (VYTIFKNLTIILIAYGEVLWF). At 132 to 134 (GGR) the chain is on the lumenal side. Residues 135–155 (VTALTFVSFIFMVISSIIAAW) form a helical membrane-spanning segment. Topologically, residues 156–164 (SDVQSALAS) are cytoplasmic. The chain crosses the membrane as a helical span at residues 165 to 185 (SIPGASSGVSVGAMQSLFGAL). R186 is a topological domain (lumenal). The helical transmembrane segment at 187-207 (GLNVGYFWMLVNCLTSAAYVL) threads the bilayer. Topologically, residues 208–220 (SMRKRIKSTGFSD) are cytoplasmic. The helical transmembrane segment at 221–241 (WDTMFYNNLLSIPVLAVFSLI) threads the bilayer. The Lumenal portion of the chain corresponds to 242–260 (AEDWGRENLNRNFPAETRN). Residues 261–281 (FLLFAIAFSGAAAVGISYTTA) form a helical membrane-spanning segment. Residues 282-291 (WCVRVTSSTT) are Cytoplasmic-facing. Residues 292-312 (YSMVGALNKLPVAASGMLFFG) traverse the membrane as a helical segment. Topologically, residues 313 to 314 (DP) are lumenal. Residues 315-335 (VTVGSVSAVGVGFFAGIVYAV) form a helical membrane-spanning segment. At 336 to 360 (AKNNQKKNERRQAADAIIPMASRKP) the chain is on the cytoplasmic side.

Belongs to the TPT transporter family. SLC35D subfamily. Homooligomer.

The protein localises to the golgi apparatus membrane. It localises to the cytoplasmic vesicle membrane. It is found in the endoplasmic reticulum membrane. Functionally, involved in the import of GDP-mannose from the cytoplasm into the Golgi lumen. This Coprinopsis cinerea (strain Okayama-7 / 130 / ATCC MYA-4618 / FGSC 9003) (Inky cap fungus) protein is GDP-mannose transporter (VRG4).